Reading from the N-terminus, the 529-residue chain is Bifunctional purine biosynthesis protein PurH (529 aa).

The 148-residue stretch at 1 to 148 (MQQRRPVRRA…KNHKDVAIVV (148 aa)) folds into the MGS-like domain.

This sequence belongs to the PurH family.

The catalysed reaction is (6R)-10-formyltetrahydrofolate + 5-amino-1-(5-phospho-beta-D-ribosyl)imidazole-4-carboxamide = 5-formamido-1-(5-phospho-D-ribosyl)imidazole-4-carboxamide + (6S)-5,6,7,8-tetrahydrofolate. The enzyme catalyses IMP + H2O = 5-formamido-1-(5-phospho-D-ribosyl)imidazole-4-carboxamide. The protein operates within purine metabolism; IMP biosynthesis via de novo pathway; 5-formamido-1-(5-phospho-D-ribosyl)imidazole-4-carboxamide from 5-amino-1-(5-phospho-D-ribosyl)imidazole-4-carboxamide (10-formyl THF route): step 1/1. It functions in the pathway purine metabolism; IMP biosynthesis via de novo pathway; IMP from 5-formamido-1-(5-phospho-D-ribosyl)imidazole-4-carboxamide: step 1/1. This Salmonella agona (strain SL483) protein is Bifunctional purine biosynthesis protein PurH.